The following is a 210-amino-acid chain: Probable glutathione peroxidase 8 (210 aa).

Residues V21–L40 form a helical membrane-spanning segment.

This sequence belongs to the glutathione peroxidase family.

The protein localises to the membrane. The enzyme catalyses 2 glutathione + H2O2 = glutathione disulfide + 2 H2O. The polypeptide is Probable glutathione peroxidase 8 (gpx8) (Tetraodon nigroviridis (Spotted green pufferfish)).